The following is a 380-amino-acid chain: Chaperone protein DnaJ (380 aa).

The region spanning 6–71 is the J domain; sequence DYYAILEVSR…QKRAAYDQYG (66 aa). The segment at 136–215 adopts a CR-type zinc-finger fold; that stretch reads GVKKDVRVIT…CHGEGTVEKE (80 aa). Positions 149, 152, 167, 170, 189, 192, 203, and 206 each coordinate Zn(2+). CXXCXGXG motif repeat units follow at residues 149–156, 167–174, 189–196, and 203–210; these read CEACHGTG, CPSCHGAG, CPTCHGAG, and CKVCHGEG.

The protein belongs to the DnaJ family. Homodimer. Requires Zn(2+) as cofactor.

The protein resides in the cytoplasm. Participates actively in the response to hyperosmotic and heat shock by preventing the aggregation of stress-denatured proteins and by disaggregating proteins, also in an autonomous, DnaK-independent fashion. Unfolded proteins bind initially to DnaJ; upon interaction with the DnaJ-bound protein, DnaK hydrolyzes its bound ATP, resulting in the formation of a stable complex. GrpE releases ADP from DnaK; ATP binding to DnaK triggers the release of the substrate protein, thus completing the reaction cycle. Several rounds of ATP-dependent interactions between DnaJ, DnaK and GrpE are required for fully efficient folding. Also involved, together with DnaK and GrpE, in the DNA replication of plasmids through activation of initiation proteins. The polypeptide is Chaperone protein DnaJ (Acetobacter pasteurianus (strain NBRC 105184 / IFO 3283-01)).